A 390-amino-acid polypeptide reads, in one-letter code: 1-acyl-sn-glycerol-3-phosphate acyltransferase 2 (390 aa).

A helical membrane pass occupies residues 2-22; it reads AMAAAVIVPLGILFFISGLVV. Residues 91-96 carry the HXXXXD motif motif; the sequence is HRSDID. The next 2 membrane-spanning stretches (helical) occupy residues 305-325 and 333-353; these read LAVV…FLHW and KGIA…QILI. Residues 358 to 390 are disordered; sequence SERSTPAKVAPAKPKDNHQSGPSSQTEVEEKQK.

This sequence belongs to the 1-acyl-sn-glycerol-3-phosphate acyltransferase family.

The protein localises to the endoplasmic reticulum membrane. The catalysed reaction is a 1-acyl-sn-glycero-3-phosphate + an acyl-CoA = a 1,2-diacyl-sn-glycero-3-phosphate + CoA. Its pathway is phospholipid metabolism; CDP-diacylglycerol biosynthesis; CDP-diacylglycerol from sn-glycerol 3-phosphate: step 2/3. Its function is as follows. Converts lysophosphatidic acid (LPA) into phosphatidic acid by incorporating acyl moiety at the 2 position. The sequence is that of 1-acyl-sn-glycerol-3-phosphate acyltransferase 2 (LPAT2) from Brassica napus (Rape).